The primary structure comprises 201 residues: Retinol-binding protein 4 (201 aa).

The first 18 residues, 1–18 (MEWVWALVVLAALGSAGA), serve as a signal peptide directing secretion. 3 disulfide bridges follow: C22-C178, C88-C192, and C138-C147. Q116 contributes to the substrate binding site. R139 carries the post-translational modification Omega-N-methylarginine.

The protein belongs to the calycin superfamily. Lipocalin family. Interacts with TTR. Interaction with TTR prevents its loss by filtration through the kidney glomeruli. Interacts with STRA6.

The protein resides in the secreted. Functionally, retinol-binding protein that mediates retinol transport in blood plasma. Delivers retinol from the liver stores to the peripheral tissues. Transfers the bound all-trans retinol to STRA6, that then facilitates retinol transport across the cell membrane. This Equus caballus (Horse) protein is Retinol-binding protein 4 (RBP4).